Consider the following 163-residue polypeptide: MTRKSFPFFLLGLILTVGIDQAVKYWVMHNIPLGTETPLLPFLSLYHVRNSGIAFSFFSSFSHWGLIFLTLIILIFLLWLWKNTQYNKSLTRFGFTLIIGGAIGNLIDRICFYYVIDYILFYINDVFYFAVFNLADTFITLGVIAIIIEELLSWIKRKSTFSE.

The next 3 membrane-spanning stretches (helical) occupy residues 8-28 (FFLL…YWVM), 61-81 (FSHW…LWLW), and 93-113 (FGFT…ICFY). Catalysis depends on residues aspartate 117 and aspartate 136. The helical transmembrane segment at 128–148 (YFAVFNLADTFITLGVIAIII) threads the bilayer.

It belongs to the peptidase A8 family.

Its subcellular location is the cell inner membrane. The catalysed reaction is Release of signal peptides from bacterial membrane prolipoproteins. Hydrolyzes -Xaa-Yaa-Zaa-|-(S,diacylglyceryl)Cys-, in which Xaa is hydrophobic (preferably Leu), and Yaa (Ala or Ser) and Zaa (Gly or Ala) have small, neutral side chains.. The protein operates within protein modification; lipoprotein biosynthesis (signal peptide cleavage). Functionally, this protein specifically catalyzes the removal of signal peptides from prolipoproteins. This chain is Lipoprotein signal peptidase, found in Bartonella henselae (strain ATCC 49882 / DSM 28221 / CCUG 30454 / Houston 1) (Rochalimaea henselae).